We begin with the raw amino-acid sequence, 1043 residues long: Polycomb protein Pcl (1043 aa).

Disordered stretches follow at residues 1 to 34 (MMNN…SAPP), 271 to 302 (PDST…PLLA), 317 to 346 (FKTV…AAPS), and 395 to 422 (KLRK…NTSP). The span at 25–34 (PSTAVPSAPP) shows a compositional bias: low complexity. The span at 324-344 (PPTPPTPPSPPPPPPAPPVAA) shows a compositional bias: pro residues. The region spanning 349–404 (VTYALQEDVFIKCNDGRFYLGTIIDQTSDQYLIRFDDQSEQWCEPDKLRKLGGGSS) is the Tudor domain. The span at 399 to 412 (LGGGSSITAGGGGA) shows a compositional bias: gly residues. 2 consecutive PHD-type zinc fingers follow at residues 424 to 472 (GPMC…CAKP) and 512 to 560 (QIYC…VFCC). Over residues 737–757 (AKKQAAQKADKHDELPLKPDL) the composition is skewed to basic and acidic residues. Disordered stretches follow at residues 737–819 (AKKQ…TSSL) and 931–985 (AKDL…PGHS). Residues 783 to 792 (SRKRKAFRLS) are compositionally biased toward basic residues. The segment covering 793-804 (KRYDNSRNHCDL) has biased composition (basic and acidic residues). A phosphoserine mark is found at Ser805 and Ser806. The segment covering 807-819 (DENSSSSRGTSSL) has biased composition (low complexity). Basic residues predominate over residues 945–954 (THGRLLRQRP). Residues 955 to 977 (QKQSPSQSRRNSTSSTATSSSSN) show a composition bias toward low complexity.

It belongs to the Polycomblike family. Component of a form of the Esc/E(z) complex present specifically during early embryogenesis which is composed of Caf1-55, esc, E(z), Su(z)12, Pcl and HDAC1/Rpd3. This complex is distinct from the PRC1 complex, which contains many other PcG proteins like Pc, Ph, Psc, Su(z)2. The two complexes however cooperate and interact together during the first 3 hours of development to establish PcG silencing. Interacts with corto in vitro.

The protein resides in the nucleus. It localises to the chromosome. Functionally, polycomb group (PcG) protein. While PcG proteins are generally required to maintain the transcriptionally repressive state of homeotic genes throughout development, this protein is specifically required during the first 6 hours of embryogenesis to establish the repressed state. Component of the Esc/E(z) complex, which methylates 'Lys-9' and 'Lys-27' residues of histone H3, leading to transcriptional repression of the affected target gene. The Esc/E(z) complex is necessary but not sufficient for the repression of homeotic target genes, suggesting that the recruitment of the distinct PRC1 complex is also required. Required for the correct spatial expression of the homeotic genes of the Antennapedia and Bithorax complexes. This Drosophila melanogaster (Fruit fly) protein is Polycomb protein Pcl (Pcl).